A 199-amino-acid polypeptide reads, in one-letter code: MIALLTGKLAYKSPEFIILDVNGVGYQVHIPFSTYYTLPVEGGALSLQIHTSVKEDAINLYGFRTQQEKELFQLLIGVSGVGPKLATGILSNSEPSELADSLVNGNLARLSAIPGIGKKTAERLVLELKEKMKKLGLAQPQAGGTTAPAKQEIRDDVLSALINLGYKEAVVQKALAELKVTEDATVELVLKQALKILMK.

A domain I region spans residues Met1–Arg64. The segment at Thr65–Gly143 is domain II. Residues Gly144–Pro148 form a flexible linker region. The segment at Ala149–Lys199 is domain III.

Belongs to the RuvA family. Homotetramer. Forms an RuvA(8)-RuvB(12)-Holliday junction (HJ) complex. HJ DNA is sandwiched between 2 RuvA tetramers; dsDNA enters through RuvA and exits via RuvB. An RuvB hexamer assembles on each DNA strand where it exits the tetramer. Each RuvB hexamer is contacted by two RuvA subunits (via domain III) on 2 adjacent RuvB subunits; this complex drives branch migration. In the full resolvosome a probable DNA-RuvA(4)-RuvB(12)-RuvC(2) complex forms which resolves the HJ.

It is found in the cytoplasm. Functionally, the RuvA-RuvB-RuvC complex processes Holliday junction (HJ) DNA during genetic recombination and DNA repair, while the RuvA-RuvB complex plays an important role in the rescue of blocked DNA replication forks via replication fork reversal (RFR). RuvA specifically binds to HJ cruciform DNA, conferring on it an open structure. The RuvB hexamer acts as an ATP-dependent pump, pulling dsDNA into and through the RuvAB complex. HJ branch migration allows RuvC to scan DNA until it finds its consensus sequence, where it cleaves and resolves the cruciform DNA. This Citrifermentans bemidjiense (strain ATCC BAA-1014 / DSM 16622 / JCM 12645 / Bem) (Geobacter bemidjiensis) protein is Holliday junction branch migration complex subunit RuvA.